The following is a 177-amino-acid chain: Large ribosomal subunit protein uL6 (177 aa).

This sequence belongs to the universal ribosomal protein uL6 family. As to quaternary structure, part of the 50S ribosomal subunit.

In terms of biological role, this protein binds to the 23S rRNA, and is important in its secondary structure. It is located near the subunit interface in the base of the L7/L12 stalk, and near the tRNA binding site of the peptidyltransferase center. This Salmonella arizonae (strain ATCC BAA-731 / CDC346-86 / RSK2980) protein is Large ribosomal subunit protein uL6.